Reading from the N-terminus, the 344-residue chain is tRNA(Ile)-lysidine synthase (344 aa).

Residue 43 to 48 (SGGADS) coordinates ATP.

It belongs to the tRNA(Ile)-lysidine synthase family.

The protein localises to the cytoplasm. It catalyses the reaction cytidine(34) in tRNA(Ile2) + L-lysine + ATP = lysidine(34) in tRNA(Ile2) + AMP + diphosphate + H(+). Its function is as follows. Ligates lysine onto the cytidine present at position 34 of the AUA codon-specific tRNA(Ile) that contains the anticodon CAU, in an ATP-dependent manner. Cytidine is converted to lysidine, thus changing the amino acid specificity of the tRNA from methionine to isoleucine. This is tRNA(Ile)-lysidine synthase from Bordetella parapertussis (strain 12822 / ATCC BAA-587 / NCTC 13253).